We begin with the raw amino-acid sequence, 375 residues long: Erythronate-4-phosphate dehydrogenase (375 aa).

2 residues coordinate substrate: serine 45 and threonine 66. NAD(+) contacts are provided by residues aspartate 146, threonine 175, 206–208, and aspartate 232; that span reads ASR. Arginine 208 is a catalytic residue. Glutamate 237 is a catalytic residue. The active-site Proton donor is histidine 254. Residue glycine 257 coordinates NAD(+). Residue tyrosine 258 participates in substrate binding.

Belongs to the D-isomer specific 2-hydroxyacid dehydrogenase family. PdxB subfamily. Homodimer.

Its subcellular location is the cytoplasm. The enzyme catalyses 4-phospho-D-erythronate + NAD(+) = (R)-3-hydroxy-2-oxo-4-phosphooxybutanoate + NADH + H(+). Its pathway is cofactor biosynthesis; pyridoxine 5'-phosphate biosynthesis; pyridoxine 5'-phosphate from D-erythrose 4-phosphate: step 2/5. In terms of biological role, catalyzes the oxidation of erythronate-4-phosphate to 3-hydroxy-2-oxo-4-phosphonooxybutanoate. The polypeptide is Erythronate-4-phosphate dehydrogenase (Proteus mirabilis (strain HI4320)).